The sequence spans 313 residues: Ankyrin repeat family A protein 2 (313 aa).

5 ANK repeats span residues 148-180 (ANSLSVHQLAAQGEMLYLATRIEQENVINHTDE), 181-213 (EGFTPLMWAAAHGQIAVVEFLLQNGADPQLLGK), 214-246 (GRESALSLACSKGYTDIVKMLLDCGVDVNEYDW), 247-279 (NGGTPLLYAVHGNHVKCVKMLLENGADPTIETD), and 280-313 (SGYNSMDLAVALGYRSVQQVIESHLLKLLQNIKE).

As to quaternary structure, interacts (via ANK repeats) with CCDC8 (via PxLPxI/L motif); mediates the interaction with the 3M complex which is composed of CCDC8, CUL7 and OBSL1. Interacts (via ANK repeats) with HDAC4 (via PxLPxI/L motif). Interacts (via ANK repeats) with HDAC5 (via PxLPxI/L motif). Interacts (via ANK repeats) with LRP2/megalin (via PxLPxI/L motif). Interacts (via ANK repeats) with RFX7 (via PxLPxI/L motif). Interacts with AHRR. Interacts with NEK6.

Its subcellular location is the cytoplasm. The protein localises to the cytoskeleton. The protein resides in the membrane. Functionally, may regulate the interaction between the 3M complex and the histone deacetylases HDAC4 and HDAC5. May also regulate LRP2/megalin. The polypeptide is Ankyrin repeat family A protein 2 (ANKRA2) (Bos taurus (Bovine)).